The sequence spans 30 residues: Glucagon-like peptide (30 aa).

Arginine amide is present on arginine 30.

This sequence belongs to the glucagon family.

The protein resides in the secreted. The polypeptide is Glucagon-like peptide (Anguilla anguilla (European freshwater eel)).